The following is a 92-amino-acid chain: Dolichol-phosphate mannosyltransferase subunit 3 (92 aa).

Helical transmembrane passes span 8–28 (LWGL…ALGL) and 37–57 (VLWP…LGTV).

This sequence belongs to the DPM3 family. Component of the dolichol-phosphate mannose (DPM) synthase complex composed of DPM1, DPM2 and DPM3; within the complex, associates with DPM1 via its C-terminal domain and with DPM2 via its N-terminal portion. This interaction stabilizes DPM1 protein.

The protein localises to the endoplasmic reticulum membrane. The protein operates within protein modification; protein glycosylation. Functionally, stabilizer subunit of the dolichol-phosphate mannose (DPM) synthase complex; tethers catalytic subunit DPM1 to the endoplasmic reticulum. The chain is Dolichol-phosphate mannosyltransferase subunit 3 (DPM3) from Homo sapiens (Human).